A 302-amino-acid polypeptide reads, in one-letter code: Acetaldehyde dehydrogenase (302 aa).

The active-site Acyl-thioester intermediate is C131. Residues 162-170 (SAGPGTRKN) and N273 each bind NAD(+).

The protein belongs to the acetaldehyde dehydrogenase family.

It catalyses the reaction acetaldehyde + NAD(+) + CoA = acetyl-CoA + NADH + H(+). This is Acetaldehyde dehydrogenase from Acidovorax sp. (strain JS42).